A 307-amino-acid chain; its full sequence is Small ribosomal subunit biogenesis GTPase RsgA (307 aa).

The segment at 1–20 (MPSEHPFSDGISTPNPKETM) is disordered. Positions 10 to 20 (GISTPNPKETM) are enriched in polar residues. The 158-residue stretch at 85–242 (RQDAWKTKLI…LIDSPGLQEF (158 aa)) folds into the CP-type G domain. GTP contacts are provided by residues 135–138 (NKAD) and 184–192 (GQSGMGKST). The Zn(2+) site is built by Cys-266, Cys-271, His-273, and Cys-279.

Belongs to the TRAFAC class YlqF/YawG GTPase family. RsgA subfamily. As to quaternary structure, monomer. Associates with 30S ribosomal subunit, binds 16S rRNA. Zn(2+) serves as cofactor.

It localises to the cytoplasm. Its function is as follows. One of several proteins that assist in the late maturation steps of the functional core of the 30S ribosomal subunit. Helps release RbfA from mature subunits. May play a role in the assembly of ribosomal proteins into the subunit. Circularly permuted GTPase that catalyzes slow GTP hydrolysis, GTPase activity is stimulated by the 30S ribosomal subunit. The polypeptide is Small ribosomal subunit biogenesis GTPase RsgA (Neisseria meningitidis serogroup A / serotype 4A (strain DSM 15465 / Z2491)).